A 319-amino-acid chain; its full sequence is Small ribosomal subunit protein RACK1 (319 aa).

Position 2 is an N-acetylalanine (Ala-2). 7 WD repeats span residues Gly-15–Gly-55, Gly-63–Arg-102, Gly-105–Leu-145, His-147–Asp-191, Gly-194–Thr-233, Ser-235–Arg-275, and Ala-284–Asn-319. Residues Lys-46 and Lys-53 each participate in a glycyl lysine isopeptide (Lys-Gly) (interchain with G-Cter in ubiquitin) cross-link. Position 96 is a phosphothreonine (Thr-96). Residues Lys-107, Lys-137, and Lys-161 each participate in a glycyl lysine isopeptide (Lys-Gly) (interchain with G-Cter in ubiquitin) cross-link. Thr-168 carries the post-translational modification Phosphothreonine.

The protein belongs to the WD repeat G protein beta family. Ribosomal protein RACK1 subfamily. As to quaternary structure, component of the small ribosomal subunit (SSU). Mature yeast ribosomes consist of a small (40S) and a large (60S) subunit. The 40S small subunit contains 1 molecule of ribosomal RNA (18S rRNA) and 33 different proteins (encoded by 57 genes). The large 60S subunit contains 3 rRNA molecules (25S, 5.8S and 5S rRNA) and 46 different proteins (encoded by 81 genes). RACK1 is located at the head of the SSU in the vicinity of the mRNA exit channel. RACK1 interacts with the mRNA-binding protein SCP16. RACK1 also exists simultaneously as a homodimer in a cytosolic non-ribosome-bound form.

Its subcellular location is the cytoplasm. In terms of biological role, component of the ribosome, a large ribonucleoprotein complex responsible for the synthesis of proteins in the cell. The small ribosomal subunit (SSU) binds messenger RNAs (mRNAs) and translates the encoded message by selecting cognate aminoacyl-transfer RNA (tRNA) molecules. The large subunit (LSU) contains the ribosomal catalytic site termed the peptidyl transferase center (PTC), which catalyzes the formation of peptide bonds, thereby polymerizing the amino acids delivered by tRNAs into a polypeptide chain. The nascent polypeptides leave the ribosome through a tunnel in the LSU and interact with protein factors that function in enzymatic processing, targeting, and the membrane insertion of nascent chains at the exit of the ribosomal tunnel. Located at the head of the 40S ribosomal subunit in the vicinity of the mRNA exit channel, RACK1 serves as a scaffold protein that can recruit other proteins to the ribosome. Involved in induction of the ribosome quality control (RQC) pathway; a pathway that degrades nascent peptide chains during problematic translation. Involved in the negative regulation of translation of a specific subset of proteins. This is Small ribosomal subunit protein RACK1 from Saccharomyces cerevisiae (strain ATCC 204508 / S288c) (Baker's yeast).